The following is a 1129-amino-acid chain: MSGRDLELTLDRVSSIEYPALVKEAFLNNWHASAHRSEVTSNCASLNDRYCWVLSRNQIFIWERAKSSHRAIIPTQLPLPTSGLPRSVKCVVVYDGVHRGANKTPCPGILVVSPEGVLRHWTSIESQTYIEEVLDINNEVALRVELTDEPIDGKSASFLLTTTSGTVYFLNGKGQDSAKTGALECNKVAGREAHGFRRRLSSIMFGGESKESTSLITNSFQHQSKDLLVVTVSPDVLTVYNMYTPCELWSLKTKEFFQPKIASFFEADLKRTPLKVRARLIDAAVFRDGLMILIGGTHEESQSVHMFMVWMSANWQTEQPTGVVWSARVPMNEHRALFSKIDDSIYSNLTLCIPKNTAESKKADRTDGIIIINPYFAVSLYLPFDLAKPKKPESLYRHVSIPPRDQLLGYAICSQYVYIMMLESGVSTIRLLPRGFADSSIYTHEQVVVPSLSVGTDDWPILSELLSEMVASGLPKTPLYQSLHRAFELFAEKHMAESEEELKAIIKMPDQEIARIVSQFLYAIIDYSDAANKTDTELHAKRVLTSRIMLFLKHMGVYERIISSPLGISRGGILSLRVGGTMLGEVSERVAASTAIWTWKTSNETNSAVFDAIIEKVLRIPEVQDLGLKDKDALFGRCGLVHHIPVVAAQQLEKNVIGKTKSHRFEVFHAVCELLSGIKETIISWRNCRTKVAIPKFPIWWTLETFASCYRDVAEKIIEELKNGSSTDSERARLLMYILSIYDFYLSESDSQPDNDKVLQEMIALGKPADAMELAEKHKDFGTLVKNYLTTDVGTRQKTFERYKKMFEKDDFEMYLCDYLKEHGRNDVLLQQGGSRVDAYLDNFKELRYSREIANKQFGKAALTLMSLADAETKSFSKFVEFLTRAYYCACSSIDGTDVSEVLDFYKRRYPEMKHRKRIPTEILKICFGNDLDAMMSVEDMLEWNMAVQPNDEASVEGFARAFHLLADLLAVHPDSDELKKKIDKTWKALVDYDEWNRVRSKEDVEKKTIFGKFCNYLINSYPADKGDSFPIWMPISRRLIFPTDIDTVLDECIANTTGNHLSWIKGHLKWIGEQLCKQALLPKSAFFRPDMKQVGSISQAALEAFGPILQRREQRFIDQLNRDSMMET.

The protein belongs to the nucleoporin Nup133 family.

The protein resides in the nucleus envelope. It localises to the nucleus. The protein localises to the nuclear pore complex. In terms of biological role, important for early nematode development. The chain is Nuclear pore complex protein 15 from Caenorhabditis elegans.